A 184-amino-acid chain; its full sequence is Elongation factor P (184 aa).

The protein belongs to the elongation factor P family.

Its subcellular location is the cytoplasm. Its pathway is protein biosynthesis; polypeptide chain elongation. Functionally, involved in peptide bond synthesis. Stimulates efficient translation and peptide-bond synthesis on native or reconstituted 70S ribosomes in vitro. Probably functions indirectly by altering the affinity of the ribosome for aminoacyl-tRNA, thus increasing their reactivity as acceptors for peptidyl transferase. The polypeptide is Elongation factor P (Delftia acidovorans (strain DSM 14801 / SPH-1)).